Reading from the N-terminus, the 368-residue chain is Glutamate 5-kinase (368 aa).

Lysine 10 is an ATP binding site. Residues serine 50, aspartate 137, and asparagine 149 each contribute to the substrate site. Threonine 169–aspartate 170 is an ATP binding site. The PUA domain occupies arginine 276–methionine 354.

It belongs to the glutamate 5-kinase family.

Its subcellular location is the cytoplasm. It catalyses the reaction L-glutamate + ATP = L-glutamyl 5-phosphate + ADP. It functions in the pathway amino-acid biosynthesis; L-proline biosynthesis; L-glutamate 5-semialdehyde from L-glutamate: step 1/2. In terms of biological role, catalyzes the transfer of a phosphate group to glutamate to form L-glutamate 5-phosphate. This chain is Glutamate 5-kinase, found in Pseudomonas savastanoi pv. phaseolicola (strain 1448A / Race 6) (Pseudomonas syringae pv. phaseolicola (strain 1448A / Race 6)).